A 250-amino-acid chain; its full sequence is Probable transcriptional regulatory protein RER_29220 (250 aa).

Belongs to the TACO1 family.

It is found in the cytoplasm. The protein is Probable transcriptional regulatory protein RER_29220 of Rhodococcus erythropolis (strain PR4 / NBRC 100887).